We begin with the raw amino-acid sequence, 378 residues long: Mitogen-activated protein kinase mpkC (378 aa).

One can recognise a Protein kinase domain in the interval 20 to 300 (YVNPQPIGMG…AQDALRYPYL (281 aa)). ATP contacts are provided by residues 26–34 (IGMGSFGLV) and Lys-49. The active-site Proton acceptor is Asp-141. Thr-171 carries the post-translational modification Phosphothreonine. Residues 171–173 (TGY) carry the TXY motif. Residue Tyr-173 is modified to Phosphotyrosine.

Belongs to the protein kinase superfamily. Ser/Thr protein kinase family. MAP kinase subfamily. HOG1 sub-subfamily. As to quaternary structure, interacts with sakA upon osmotic and cell wall stresses. Mg(2+) is required as a cofactor. Post-translationally, dually phosphorylated on Thr-171 and Tyr-173, which activates the enzyme.

It is found in the cytoplasm. It localises to the nucleus. It catalyses the reaction L-seryl-[protein] + ATP = O-phospho-L-seryl-[protein] + ADP + H(+). It carries out the reaction L-threonyl-[protein] + ATP = O-phospho-L-threonyl-[protein] + ADP + H(+). With respect to regulation, activated by tyrosine and threonine phosphorylation. Functionally, mitogen-activated protein kinase; part of an osmotic and general signal pathways involved in regulation of the response to the cell wall damage, oxidative stress, drug resistance, and establishment of infection. Required for growth on media where sorbitol or mannitol is the sole carbon source. With sakA, plays a redundant or cooperative role in the conidial stress resistance. Also plays a supportive role in osmotic stress adaptation when sakA is deficient. Involved in paradoxical growth, the cell wall integrity (CWI) pathway and biofilm formation. Acts by modulating sakA activity upon exposure to several types o stresses and during cell wall biosynthesis. Also collaborates with sakA to allow ful virulence in a neutropenic murine model of invasive pulmonary aspergillosis. MpkC and sakA have both independent and collaborative functions during the transcriptional response to transient osmotic stress, and mpkC plays a major role in the modulation of the response to DNA metabolism while activating mitochondrial functions and cation transport. In Aspergillus fumigatus (strain ATCC MYA-4609 / CBS 101355 / FGSC A1100 / Af293) (Neosartorya fumigata), this protein is Mitogen-activated protein kinase mpkC (mpkC).